Reading from the N-terminus, the 416-residue chain is Adenosylhomocysteinase (416 aa).

Positions 55, 126, and 151 each coordinate substrate. 152–154 (TTT) contacts NAD(+). Substrate-binding residues include K181 and D185. Residues N186, 215–220 (GYGWVG), E238, N273, 294–296 (AGH), and N341 each bind NAD(+).

It belongs to the adenosylhomocysteinase family. The cofactor is NAD(+).

The protein resides in the cytoplasm. It catalyses the reaction S-adenosyl-L-homocysteine + H2O = L-homocysteine + adenosine. The protein operates within amino-acid biosynthesis; L-homocysteine biosynthesis; L-homocysteine from S-adenosyl-L-homocysteine: step 1/1. May play a key role in the regulation of the intracellular concentration of adenosylhomocysteine. The polypeptide is Adenosylhomocysteinase (Aeropyrum pernix (strain ATCC 700893 / DSM 11879 / JCM 9820 / NBRC 100138 / K1)).